The following is a 297-amino-acid chain: Homoserine kinase (297 aa).

ATP is bound at residue 82–92 (PLTRGLGSSAS).

This sequence belongs to the GHMP kinase family. Homoserine kinase subfamily.

Its subcellular location is the cytoplasm. It catalyses the reaction L-homoserine + ATP = O-phospho-L-homoserine + ADP + H(+). The protein operates within amino-acid biosynthesis; L-threonine biosynthesis; L-threonine from L-aspartate: step 4/5. Its function is as follows. Catalyzes the ATP-dependent phosphorylation of L-homoserine to L-homoserine phosphate. The chain is Homoserine kinase from Bacillus cereus (strain G9842).